The sequence spans 284 residues: Tropomyosin (284 aa).

The stretch at 1–273 (MEAIKKKMQA…KEKYKSISDE (273 aa)) forms a coiled coil.

It belongs to the tropomyosin family. As to quaternary structure, homodimer. Ubiquitous, but especially prevalent in the anterior muscle bundles associated with legs. Expression in the mid and posterior regions is probably related to the numerous, small muscle bundles associated with the digestive and reproductive systems (at protein level).

Functionally, tropomyosin, in association with the troponin complex, plays a central role in the calcium dependent regulation of muscle contraction. The sequence is that of Tropomyosin from Psoroptes ovis (Sheep scab mite).